A 227-amino-acid polypeptide reads, in one-letter code: Cytochrome c oxidase subunit 2 (227 aa).

The Mitochondrial intermembrane portion of the chain corresponds to 1–14 (MAYPMQLGLQDATS). The helical transmembrane segment at 15-45 (PIMEELLHFHDHTLMIVFLISSLVLYIISLM) threads the bilayer. At 46-59 (LTTKLTHTSTMDAQ) the chain is on the mitochondrial matrix side. Residues 60–87 (EVETIWTILPAIILIMIALPSLRILYMM) form a helical membrane-spanning segment. The Mitochondrial intermembrane segment spans residues 88 to 227 (DEINNPSLTV…HFEKWSASML (140 aa)). Cu cation contacts are provided by H161, C196, E198, C200, H204, and M207. E198 is a Mg(2+) binding site.

The protein belongs to the cytochrome c oxidase subunit 2 family. In terms of assembly, component of the cytochrome c oxidase (complex IV, CIV), a multisubunit enzyme composed of 14 subunits. The complex is composed of a catalytic core of 3 subunits MT-CO1, MT-CO2 and MT-CO3, encoded in the mitochondrial DNA, and 11 supernumerary subunits COX4I, COX5A, COX5B, COX6A, COX6B, COX6C, COX7A, COX7B, COX7C, COX8 and NDUFA4, which are encoded in the nuclear genome. The complex exists as a monomer or a dimer and forms supercomplexes (SCs) in the inner mitochondrial membrane with NADH-ubiquinone oxidoreductase (complex I, CI) and ubiquinol-cytochrome c oxidoreductase (cytochrome b-c1 complex, complex III, CIII), resulting in different assemblies (supercomplex SCI(1)III(2)IV(1) and megacomplex MCI(2)III(2)IV(2)). Found in a complex with TMEM177, COA6, COX18, COX20, SCO1 and SCO2. Interacts with TMEM177 in a COX20-dependent manner. Interacts with COX20. Interacts with COX16. Requires Cu cation as cofactor.

It localises to the mitochondrion inner membrane. It carries out the reaction 4 Fe(II)-[cytochrome c] + O2 + 8 H(+)(in) = 4 Fe(III)-[cytochrome c] + 2 H2O + 4 H(+)(out). Its function is as follows. Component of the cytochrome c oxidase, the last enzyme in the mitochondrial electron transport chain which drives oxidative phosphorylation. The respiratory chain contains 3 multisubunit complexes succinate dehydrogenase (complex II, CII), ubiquinol-cytochrome c oxidoreductase (cytochrome b-c1 complex, complex III, CIII) and cytochrome c oxidase (complex IV, CIV), that cooperate to transfer electrons derived from NADH and succinate to molecular oxygen, creating an electrochemical gradient over the inner membrane that drives transmembrane transport and the ATP synthase. Cytochrome c oxidase is the component of the respiratory chain that catalyzes the reduction of oxygen to water. Electrons originating from reduced cytochrome c in the intermembrane space (IMS) are transferred via the dinuclear copper A center (CU(A)) of subunit 2 and heme A of subunit 1 to the active site in subunit 1, a binuclear center (BNC) formed by heme A3 and copper B (CU(B)). The BNC reduces molecular oxygen to 2 water molecules using 4 electrons from cytochrome c in the IMS and 4 protons from the mitochondrial matrix. The polypeptide is Cytochrome c oxidase subunit 2 (MT-CO2) (Damaliscus pygargus phillipsi (Blesbok)).